The sequence spans 81 residues: MKTLLLTLVVVTIVCLDLGYTLKCNQLIPPFYKACAAGKNLCYKMFMVAAPKVPVKRGCIDVCPKSSLLVKYVCCNTDRCS.

The first 21 residues, 1-21 (MKTLLLTLVVVTIVCLDLGYT), serve as a signal peptide directing secretion. 4 cysteine pairs are disulfide-bonded: Cys24–Cys42, Cys35–Cys59, Cys63–Cys74, and Cys75–Cys80.

It belongs to the three-finger toxin family. Short-chain subfamily. Type IA cytotoxin sub-subfamily. As to quaternary structure, monomer in solution; Homodimer and oligomer in the presence of negatively charged lipids forming a pore with a size ranging between 20 and 30 Angstroms. Expressed by the venom gland.

It is found in the secreted. The protein resides in the target cell membrane. Its function is as follows. Shows cytolytic activity on many different cells by forming pore in lipid membranes. In vivo, increases heart rate or kills the animal by cardiac arrest. In addition, it binds to heparin with high affinity, interacts with Kv channel-interacting protein 1 (KCNIP1) in a calcium-independent manner, and binds to integrin alpha-V/beta-3 (ITGAV/ITGB3) with moderate affinity. This is Cytotoxin 8 from Naja atra (Chinese cobra).